A 674-amino-acid chain; its full sequence is MAQAYWQCYPWLVLLCACAWSYPGPESLGREDVRDCSTNPPRLPVTAVNTTMRLAALRQQMEKSNLSAYIIPDTDAHMSEYIGKHDERRAWISGFTGSAGTAVVTKKKAAVWTDSRYWTQAERQMDCNWELHKEVSISSIVAWILAEVPDGENVGFDPFLFSVGSWENYDQELQDSNRHLLSITTNLVDVAWGSERPPVPSQPIYALPKEFTGSTWQEKVSAIRSYMQNHTMAPTGVLLSALDETAWLFNLRSSDIPYNPFFYSYTLLTDSSIRLFVNKSRFSLETLQYLNTNCTLPMCVQLEDYSQIRDGVKAYASGNVKILIGISYTTYGVYDVIPKEKLVTETYSPVMLIKAVKNSKEQALLKASHVRDAVAVIQYLVWLEKNVPKGTVDEFSGAEHIDQLRRNENFSSGPSFETISASGLNAALAHYSPTKELHRKLSLDEMYLVDSGGQYWDGTTDITRTVHWGTPTAFQKEAYTRVLMGNIDLSRLVFPAATSGRVVEAFARRALWEVGLNYGHGTGHGIGNFLCVHEWPVGFQYNNMAMAKGMFTSIEPGYYQDGEFGIRLEDVALVVEAKTKYPGTYLTFELVSFVPYDRNLIDVSLLSPEQLQYLNRYYQTIRENIGPELQRRQLLEEFAWLERHTEPLSASAPHTTSLASMWVASALAILSWSC.

A signal peptide spans 1–22 (MAQAYWQCYPWLVLLCACAWSY). An N-linked (GlcNAc...) asparagine glycan is attached at asparagine 65. Arginine 116 lines the substrate pocket. 2 N-linked (GlcNAc...) asparagine glycosylation sites follow: asparagine 278 and asparagine 293. Histidine 430 is a binding site for substrate. Aspartate 450, aspartate 461, and histidine 524 together coordinate Zn(2+). Substrate-binding residues include histidine 524, histidine 533, and glutamate 555. 2 residues coordinate Zn(2+): glutamate 555 and glutamate 569. The GPI-anchor amidated alanine moiety is linked to residue alanine 650. A propeptide spans 651 to 674 (SAPHTTSLASMWVASALAILSWSC) (removed in mature form).

Belongs to the peptidase M24B family. In terms of assembly, homotrimer. The cofactor is Zn(2+). In terms of processing, N-glycosylated. In terms of tissue distribution, expressed strongly in lung, liver and heart, and at lower levels in kidney, testis, brain, spleen and skeletal muscle.

The protein localises to the cell membrane. The enzyme catalyses Release of any N-terminal amino acid, including proline, that is linked to proline, even from a dipeptide or tripeptide.. With respect to regulation, inhibited by the chelating agents 1,10-phenanthroline and EDTA. Inhibited by the thiol-containing compounds 2-mercaptoethanol and dithiothreitol. Also inhibited by apstatin, captopril and p-(ch1oromercuri)benzenesulfonic acid. Weakly inhibited by D,L-2-mercaptomethyl-3-guanidinoethylthiopropanoic acid and N-[l-(R,S)-carboxy-(2-phenylethyl)]-Ala-Ala-Phe-p-aminobenzoate. Inhibited by ramiprilat and enalaprilat, in a Mn(2+)-dependent manner. Metal ions have a complex substrate- and concentration-dependent effect on activity. Activity towards Arg-Pro-Pro and Gly-Pro-Hyp is stimulated by Mn(2+) ion concentrations of 10-100 uM and then inhibited at Mn(2+) concentrations of 1-2 mM. Mn(2+) concentrations in excess of 2 mM stimulate activity towards Gly-Pro-Hyp but inhibit activity towards Arg-Pro-Pro. Zn(2+) and Co(2+) ions also inhibit activity towards Arg-Pro-Pro at high concentrations. Activity towards bradykinin is inhibited by Mn(2+) concentrations in excess of 1 mM. Its function is as follows. Membrane-bound metalloprotease which catalyzes the removal of a penultimate prolyl residue from the N-termini of peptides, such as Arg-Pro-Pro. May play a role in the metabolism of the vasodilator bradykinin. The polypeptide is Xaa-Pro aminopeptidase 2 (Rattus norvegicus (Rat)).